A 203-amino-acid polypeptide reads, in one-letter code: High frequency lysogenization protein HflD homolog (203 aa).

Belongs to the HflD family.

The protein localises to the cytoplasm. The protein resides in the cell inner membrane. This chain is High frequency lysogenization protein HflD homolog, found in Histophilus somni (strain 2336) (Haemophilus somnus).